The chain runs to 316 residues: HTH-type transcriptional regulator cbl (316 aa).

The region spanning Met1–Met59 is the HTH lysR-type domain. The H-T-H motif DNA-binding region spans Leu19 to Arg38.

This sequence belongs to the LysR transcriptional regulatory family.

May be an accessory regulatory protein within the cys regulon. This is HTH-type transcriptional regulator cbl (cbl) from Klebsiella aerogenes (Enterobacter aerogenes).